A 231-amino-acid chain; its full sequence is UPF0653 protein C607.02c (231 aa).

Disordered stretches follow at residues 1 to 33, 47 to 68, 93 to 132, and 147 to 178; these read MPTKTKKRSVLEAERKKIGLDHAPKEDESVDDN, YHESKKKEIKKGNLKNKKKKDY, SFKSGPSKIDEFTDKKEKKKIAKRKEKRERDWNEIEENFE, and IESRKKRKNSPDPWANLQTKPSFGETVQAPPE. Residues 9–27 show a composition bias toward basic and acidic residues; sequence SVLEAERKKIGLDHAPKED. 2 stretches are compositionally biased toward basic residues: residues 53 to 67 and 109 to 119; these read KEIKKGNLKNKKKKD and EKKKIAKRKEK.

Belongs to the UPF0653 family.

The protein resides in the nucleus. It is found in the nucleolus. In Schizosaccharomyces pombe (strain 972 / ATCC 24843) (Fission yeast), this protein is UPF0653 protein C607.02c.